We begin with the raw amino-acid sequence, 147 residues long: uncharacterized protein (147 aa).

In terms of domain architecture, HTH asnC-type spans 2 to 63 (LDELDKKIIG…KLNYENIGYD (62 aa)). The segment at residues 21–40 (YREIAKELNVAVGTIYNRIK) is a DNA-binding region (H-T-H motif).

This is an uncharacterized protein from Pyrococcus abyssi (strain GE5 / Orsay).